The sequence spans 313 residues: Ribosomal RNA small subunit methyltransferase H (313 aa).

S-adenosyl-L-methionine contacts are provided by residues glycine 35 to histidine 37, aspartate 55, phenylalanine 79, aspartate 101, and glutamine 108.

Belongs to the methyltransferase superfamily. RsmH family.

The protein localises to the cytoplasm. It carries out the reaction cytidine(1402) in 16S rRNA + S-adenosyl-L-methionine = N(4)-methylcytidine(1402) in 16S rRNA + S-adenosyl-L-homocysteine + H(+). Its function is as follows. Specifically methylates the N4 position of cytidine in position 1402 (C1402) of 16S rRNA. This is Ribosomal RNA small subunit methyltransferase H from Escherichia coli O7:K1 (strain IAI39 / ExPEC).